A 125-amino-acid chain; its full sequence is Phosphoribosyl-AMP cyclohydrolase (125 aa).

Residue Asp-74 coordinates Mg(2+). Cys-75 provides a ligand contact to Zn(2+). Positions 76 and 78 each coordinate Mg(2+). Zn(2+)-binding residues include Cys-92 and Cys-99.

Belongs to the PRA-CH family. As to quaternary structure, homodimer. It depends on Mg(2+) as a cofactor. Zn(2+) is required as a cofactor.

The protein localises to the cytoplasm. The catalysed reaction is 1-(5-phospho-beta-D-ribosyl)-5'-AMP + H2O = 1-(5-phospho-beta-D-ribosyl)-5-[(5-phospho-beta-D-ribosylamino)methylideneamino]imidazole-4-carboxamide. Its pathway is amino-acid biosynthesis; L-histidine biosynthesis; L-histidine from 5-phospho-alpha-D-ribose 1-diphosphate: step 3/9. Its function is as follows. Catalyzes the hydrolysis of the adenine ring of phosphoribosyl-AMP. The polypeptide is Phosphoribosyl-AMP cyclohydrolase (Desulforapulum autotrophicum (strain ATCC 43914 / DSM 3382 / VKM B-1955 / HRM2) (Desulfobacterium autotrophicum)).